Reading from the N-terminus, the 349-residue chain is 5-deoxyribose 1-phosphate isomerase (349 aa).

Substrate-binding positions include 49–51, Arg92, and Gln199; that span reads RGA. The active-site Proton donor is Asp240. 250–251 contributes to the substrate binding site; it reads NK.

This sequence belongs to the EIF-2B alpha/beta/delta subunits family. DrdI subfamily.

It catalyses the reaction 5-deoxy-alpha-D-ribose 1-phosphate = 5-deoxy-D-ribulose 1-phosphate. It participates in carbohydrate degradation. Catalyzes the isomerization of 5-deoxy-alpha-D-ribose 1-phosphate to 5-deoxy-D-ribulose 1-phosphate, as part of a 5-deoxyribose salvage pathway that recycles this toxic radical SAM enzyme by-product to mainstream metabolites. This Clostridium botulinum (strain Langeland / NCTC 10281 / Type F) protein is 5-deoxyribose 1-phosphate isomerase.